The following is a 370-amino-acid chain: Cytochrome b (370 aa).

The next 4 membrane-spanning stretches (helical) occupy residues 25–45, 69–90, 105–125, and 170–190; these read FGSM…FLAV, WLMQ…YIHI, WLSG…GYVL, and FFAL…LHIL. 2 residues coordinate heme b: histidine 75 and histidine 89. The heme b site is built by histidine 174 and histidine 188. Histidine 193 is a binding site for a ubiquinone. 4 helical membrane-spanning segments follow: residues 218 to 238, 280 to 300, 312 to 332, and 339 to 358; these read YKDL…VSFF, LGGA…PFTH, LMQL…WSST, and FTTI…ISKP.

It belongs to the cytochrome b family. As to quaternary structure, the cytochrome bc1 complex contains 3 respiratory subunits (MT-CYB, CYC1 and UQCRFS1), 2 core proteins (UQCRC1 and UQCRC2) and probably 6 low-molecular weight proteins. The cofactor is heme b.

The protein localises to the mitochondrion inner membrane. Its function is as follows. Component of the ubiquinol-cytochrome c reductase complex (complex III or cytochrome b-c1 complex) that is part of the mitochondrial respiratory chain. The b-c1 complex mediates electron transfer from ubiquinol to cytochrome c. Contributes to the generation of a proton gradient across the mitochondrial membrane that is then used for ATP synthesis. The chain is Cytochrome b (MT-CYB) from Chilabothrus subflavus (Jamaican yellow boa).